The following is a 282-amino-acid chain: Diaminopimelate epimerase (282 aa).

Positions 13, 45, and 64 each coordinate substrate. Cys73 functions as the Proton donor in the catalytic mechanism. Substrate contacts are provided by residues 74-75 (GN), Asn155, Asn189, and 207-208 (ER). Cys216 acts as the Proton acceptor in catalysis. Position 217-218 (217-218 (GS)) interacts with substrate.

The protein belongs to the diaminopimelate epimerase family. In terms of assembly, homodimer.

It is found in the cytoplasm. It catalyses the reaction (2S,6S)-2,6-diaminopimelate = meso-2,6-diaminopimelate. Its pathway is amino-acid biosynthesis; L-lysine biosynthesis via DAP pathway; DL-2,6-diaminopimelate from LL-2,6-diaminopimelate: step 1/1. In terms of biological role, catalyzes the stereoinversion of LL-2,6-diaminopimelate (L,L-DAP) to meso-diaminopimelate (meso-DAP), a precursor of L-lysine and an essential component of the bacterial peptidoglycan. The chain is Diaminopimelate epimerase from Bartonella bacilliformis (strain ATCC 35685 / KC583 / Herrer 020/F12,63).